The chain runs to 308 residues: Methionyl-tRNA formyltransferase (308 aa).

Residue 110–113 coordinates (6S)-5,6,7,8-tetrahydrofolate; the sequence is SLLP.

Belongs to the Fmt family.

The enzyme catalyses L-methionyl-tRNA(fMet) + (6R)-10-formyltetrahydrofolate = N-formyl-L-methionyl-tRNA(fMet) + (6S)-5,6,7,8-tetrahydrofolate + H(+). Its function is as follows. Attaches a formyl group to the free amino group of methionyl-tRNA(fMet). The formyl group appears to play a dual role in the initiator identity of N-formylmethionyl-tRNA by promoting its recognition by IF2 and preventing the misappropriation of this tRNA by the elongation apparatus. In Neisseria meningitidis serogroup C (strain 053442), this protein is Methionyl-tRNA formyltransferase.